Reading from the N-terminus, the 325-residue chain is Protein ORANGE-ORANGE, chloroplastic (325 aa).

A chloroplast-targeting transit peptide spans 1–54; sequence MDRVLVASYPINHLIRPHSFRIDYCWSTCFTSRLNSGKERQKLSSRWRWRSMAS. Residues 53-71 are compositionally biased toward low complexity; it reads ASDSTDSSSSSSFAPSVES. The segment at 53-77 is disordered; the sequence is ASDSTDSSSSSSFAPSVESDPSDKT. 2 consecutive transmembrane segments (helical) span residues 164–184 and 217–237; these read LYYV…GLLA and IVAS…VVEV. Positions 226–317 are CR-type-like; that stretch reads VGVISALMVV…CTGMAMASEH (92 aa). Residues 248–255 form a CXXCXGXG motif repeat; sequence CKYCLGTG. The stretch at 259-266 is one CXXCXXXG motif repeat; that stretch reads CARCSNTG. Residues 292–299 form a CXXCXGXG motif repeat; it reads CQNCSGSG. Residues 303–310 form a CXXCXXXG motif repeat; sequence CPTCLCTG.

Belongs to the orange-like family.

It localises to the plastid. Its subcellular location is the chloroplast membrane. Functionally, triggers accumulation of carotenoids, mainly beta-carotene, in fruit flesh. The chain is Protein ORANGE-ORANGE, chloroplastic from Cucumis melo (Muskmelon).